The sequence spans 1634 residues: Probable serine/threonine-protein kinase DDB_G0282895 (1634 aa).

Residues 40–63 form an MORN 1 repeat; sequence YKGNLNENKLKNGKGTFLFPNSIY. The segment at 84-131 is disordered; sequence QKIQKKSSQSKSQQQPPSQTKKSSSPINLSPRLQGQNPTITTNGSNNN. Over residues 89–109 the composition is skewed to low complexity; it reads KSSQSKSQQQPPSQTKKSSSP. Over residues 110-119 the composition is skewed to polar residues; that stretch reads INLSPRLQGQ. Residues 120–131 are compositionally biased toward low complexity; the sequence is NPTITTNGSNNN. The MORN 2 repeat unit spans residues 169–191; the sequence is YNGKWINGKANGIGCFHFSKDDS. 2 stretches are compositionally biased toward low complexity: residues 273-292 and 318-339; these read SNNNSNGTTSPTSPSILSPT and SGSGFCSPSSSLSIKMSSPISS. 3 disordered regions span residues 273 to 367, 658 to 750, and 783 to 816; these read SNNN…QQQQ, TTAT…TFSV, and SSILNNNNNNNNNNNNNNNNNNNNNNNNNNNCGQ. Residues 340-351 are compositionally biased toward polar residues; that stretch reads GLQHSKTQPNVS. Composition is skewed to low complexity over residues 352–367, 658–688, and 703–715; these read QSQNQQIQQQQQQQQQ, TTATPNNNNNSSGNSKLTTTTHLTNNTTTTT, and PPSQSSSSSSPSS. A compositionally biased stretch (polar residues) spans 716 to 732; the sequence is DQTNLPSIAISSSNGIS. Over residues 787-813 the composition is skewed to low complexity; it reads NNNNNNNNNNNNNNNNNNNNNNNNNNN. A helical membrane pass occupies residues 1255–1275; the sequence is IFIGFMELCVIDELCGFSFIY. One can recognise a Protein kinase domain in the interval 1377–1634; it reads LQILQFLGEG…IIQKLCNHKC (258 aa). ATP-binding positions include 1383 to 1391 and lysine 1404; that span reads LGEGALAEV. Aspartate 1500 acts as the Proton acceptor in catalysis.

The protein belongs to the protein kinase superfamily. TKL Ser/Thr protein kinase family.

It is found in the membrane. It catalyses the reaction L-seryl-[protein] + ATP = O-phospho-L-seryl-[protein] + ADP + H(+). The enzyme catalyses L-threonyl-[protein] + ATP = O-phospho-L-threonyl-[protein] + ADP + H(+). This is Probable serine/threonine-protein kinase DDB_G0282895 from Dictyostelium discoideum (Social amoeba).